The primary structure comprises 536 residues: Enterobactin synthase component E (536 aa).

Positions 235, 240, 309, 331, 335, 415, and 432 each coordinate substrate. Residues 438 to 439 (GG) are phosphopantetheine binding. Lys-441 provides a ligand contact to substrate.

Belongs to the ATP-dependent AMP-binding enzyme family. EntE subfamily. Proteins EntB, EntD, EntE, and EntF form a multienzyme complex called enterobactin synthase. Monomer. EntA and EntE interact together.

The protein resides in the membrane. It catalyses the reaction 3 2,3-dihydroxybenzoate + 3 L-serine + 6 ATP = enterobactin + 6 AMP + 6 diphosphate + 4 H(+). The catalysed reaction is 2,3-dihydroxybenzoate + holo-[ACP] + ATP = 2,3-dihydroxybenzoyl-[ACP] + AMP + diphosphate. The enzyme catalyses 2,3-dihydroxybenzoyl-5'-AMP + holo-[ACP] = 2,3-dihydroxybenzoyl-[ACP] + AMP + H(+). The protein operates within siderophore biosynthesis; enterobactin biosynthesis. With respect to regulation, inhibited by the adenylate analogs, 5'-O-[N-(salicyl)sulfamoyl]adenosine (Sal-AMS) and 5'-O-[N-(2,3-dihydroxybenzoyl)sulfamoyl]adenosine (DHB-AMS). Adenylation of 2,3-dihydroxybenzoate (DHB) is enhanced by a protein-protein interaction between the EntA and EntE. Its function is as follows. Involved in the biosynthesis of the siderophore enterobactin (enterochelin), which is a macrocyclic trimeric lactone of N-(2,3-dihydroxybenzoyl)-serine. The serine trilactone serves as a scaffolding for the three catechol functionalities that provide hexadentate coordination for the tightly ligated iron(2+) atoms. EntE processes via a two-step adenylation-ligation reaction (bi-uni-uni-bi ping-pong mechanism). First, it catalyzes the activation of the carboxylate group of 2,3-dihydroxy-benzoate (DHB), via a reversible ATP-dependent pyrophosphate exchange reactions to yield the acyladenylate intermediate 2,3-dihydroxybenzoyl-AMP. It can also transfer AMP to salicylate, 2,4-dihydroxybenzoate, gentisate and 2,3,4-trihydroxybenzoate. In the second step, DHB is transferred from 2,3-dihydroxybenzoyl-AMP onto the phosphopantetheinylated EntB (holo-EntB) to form DHB-holo-EntB. Then this product will serve in the formation of the amide bond between 2,3-dihydroxybenzoate (DHB) and L-serine. It can also transfer adenylated salicylate to holo-EntB. In Escherichia coli (strain K12), this protein is Enterobactin synthase component E.